Here is a 106-residue protein sequence, read N- to C-terminus: Small ribosomal subunit protein bS16 (106 aa).

It belongs to the bacterial ribosomal protein bS16 family.

In Wolbachia pipientis wMel, this protein is Small ribosomal subunit protein bS16.